The primary structure comprises 390 residues: Protein phosphatase 1B (390 aa).

The segment covering 1 to 14 has biased composition (basic and acidic residues); the sequence is MGAFLDKPKTEKHN. The tract at residues 1–20 is disordered; that stretch reads MGAFLDKPKTEKHNAHGAGN. Gly2 carries N-myristoyl glycine lipidation. Lys12 is covalently cross-linked (Glycyl lysine isopeptide (Lys-Gly) (interchain with G-Cter in ISG15)). The PPM-type phosphatase domain maps to 23–295; that stretch reads RYGLSSMQGW…DNMSVVLVCF (273 aa). Positions 60, 61, 243, and 286 each coordinate Mn(2+). A disordered region spans residues 371–390; sequence NPHKDNDGGAGDLEDSLVAL. Phosphoserine is present on Ser386.

This sequence belongs to the PP2C family. Monomer. Interacts with PAK6. Interacts with the phosphorylated form of IKBKB/IKKB. Mg(2+) is required as a cofactor. The cofactor is Mn(2+). Post-translationally, isgylation negatively regulates its activity. In terms of processing, N-myristoylation is essential for the recognition of its substrates for dephosphorylation. As to expression, isoform 1: Expressed ubiquitously. Isoform 2: Expressed exclusively in testis and intestine. Isoform 3: Expressed exclusively in brain and intestine. Isoform 4: Expressed exclusively in testis and intestine.

The protein localises to the cytoplasm. The protein resides in the cytosol. It is found in the membrane. The enzyme catalyses O-phospho-L-seryl-[protein] + H2O = L-seryl-[protein] + phosphate. The catalysed reaction is O-phospho-L-threonyl-[protein] + H2O = L-threonyl-[protein] + phosphate. Enzyme with a broad specificity. Dephosphorylates PRKAA1 and PRKAA2. Inhibits TBK1-mediated antiviral signaling by dephosphorylating it at 'Ser-172'. Plays an important role in the termination of TNF-alpha-mediated NF-kappa-B activation through dephosphorylating and inactivating IKBKB/IKKB. This is Protein phosphatase 1B (Ppm1b) from Mus musculus (Mouse).